Consider the following 353-residue polypeptide: Nicotinate-nucleotide--dimethylbenzimidazole phosphoribosyltransferase (353 aa).

Residue Glu319 is the Proton acceptor of the active site.

The protein belongs to the CobT family.

The enzyme catalyses 5,6-dimethylbenzimidazole + nicotinate beta-D-ribonucleotide = alpha-ribazole 5'-phosphate + nicotinate + H(+). It participates in nucleoside biosynthesis; alpha-ribazole biosynthesis; alpha-ribazole from 5,6-dimethylbenzimidazole: step 1/2. Catalyzes the synthesis of alpha-ribazole-5'-phosphate from nicotinate mononucleotide (NAMN) and 5,6-dimethylbenzimidazole (DMB). The protein is Nicotinate-nucleotide--dimethylbenzimidazole phosphoribosyltransferase of Prosthecochloris aestuarii (strain DSM 271 / SK 413).